We begin with the raw amino-acid sequence, 248 residues long: MYKLVLIRHGESTWNKENRFTGWVDVDLTEQGRNEAYQAGELLKEAGYTFDIAYTSVLKRAIRTLWHVQDKMDLMYLPVVHSWRLNERHYGALSGLNKAETAAKFGDDQVLVWRRSYDTPPPALEATDERAPFNDPRYAKVPREQLPLTECLKDTVARVLPLWNESIAPAVRAGKQVLIAAHGNSLRALIKYLDGISDSDIVGLNIPNGVPLVYELDENLKPIKHYYLGDQDAIAQAQAAVAKQGKAG.

Substrate contacts are provided by residues 8–15, 21–22, arginine 60, 87–90, lysine 98, 114–115, and 183–184; these read RHGESTWN, TG, ERHY, RR, and GN. The active-site Tele-phosphohistidine intermediate is histidine 9. The active-site Proton donor/acceptor is glutamate 87.

The protein belongs to the phosphoglycerate mutase family. BPG-dependent PGAM subfamily. In terms of assembly, homodimer.

The enzyme catalyses (2R)-2-phosphoglycerate = (2R)-3-phosphoglycerate. The protein operates within carbohydrate degradation; glycolysis; pyruvate from D-glyceraldehyde 3-phosphate: step 3/5. In terms of biological role, catalyzes the interconversion of 2-phosphoglycerate and 3-phosphoglycerate. The polypeptide is 2,3-bisphosphoglycerate-dependent phosphoglycerate mutase (Burkholderia lata (strain ATCC 17760 / DSM 23089 / LMG 22485 / NCIMB 9086 / R18194 / 383)).